The following is a 496-amino-acid chain: Splicing factor U2AF 65 kDa subunit (496 aa).

The segment covering 1 to 26 has biased composition (basic and acidic residues); the sequence is MSDHQDGMKLEDIERQFLDVAQREGG. The disordered stretch occupies residues 1–142; it reads MSDHQDGMKL…PKKYRFWDVP (142 aa). Over residues 59–77 the composition is skewed to basic residues; the sequence is KKRKRSRSRDRDTRRRSRS. 2 stretches are compositionally biased toward basic and acidic residues: residues 78–96 and 105–138; these read RDRG…DRSR and GGRD…KYRF. RRM domains lie at 184 to 266, 291 to 368, and 404 to 488; these read RRLY…RPRD, NKIF…LACA, and NMVT…YYDV.

In terms of assembly, forms a heterodimer with the U2AF small subunit.

The protein localises to the nucleus. Necessary for the splicing of pre-mRNA. Binds to the polypyrimidine tract of introns early during spliceosome assembly. The protein is Splicing factor U2AF 65 kDa subunit (uaf-1) of Caenorhabditis elegans.